A 49-amino-acid chain; its full sequence is Astexin-2 (49 aa).

Positions 1–25 (MTKRTTIAARRVGLIDLGKATRQTK) are excised as a propeptide. Positions 26–34 (GLTQIQALD) form a cross-link, isoaspartyl glycine isopeptide (Gly-Asp).

In terms of processing, this lasso peptide is hydrolyzed to a linear form by the isopeptidase AtxE2, in vitro. The isopeptidase AtxE2 only recognizes the threaded form (but not the unthreaded form).

The protein localises to the cytoplasm. Its subcellular location is the secreted. In terms of biological role, shows weak antimicrobial activity against its phylogenetic relative Caulobacter crescentus. Does not show activity against other bacteria tested (E.coli, Vibrio sp, Burkhoderia thailandensis, and Salmonella newport). This chain is Astexin-2, found in Asticcacaulis excentricus (strain ATCC 15261 / DSM 4724 / KCTC 12464 / NCIMB 9791 / VKM B-1370 / CB 48).